The sequence spans 60 residues: Chromatin protein Cren7 (60 aa).

Belongs to the Cren7 family. As to quaternary structure, monomer. In terms of processing, methylated at multiple sites, to varying extents.

Its subcellular location is the chromosome. The protein resides in the cytoplasm. Its function is as follows. A chromatin protein, binds double-stranded DNA without sequence specificity. Constrains negative DNA supercoils. In Saccharolobus islandicus (strain M.16.4 / Kamchatka #3) (Sulfolobus islandicus), this protein is Chromatin protein Cren7.